A 183-amino-acid chain; its full sequence is COMM domain-containing protein 8 (183 aa).

The 68-residue stretch at 116 to 183 (QLQDFDWQVK…AANKVVLQLK (68 aa)) folds into the COMM domain.

The protein belongs to the COMM domain-containing protein 8 family. In terms of assembly, component of the commander complex consisting of the CCC subcomplex and the retriever subcomplex. Component of the CCC (COMMD/CCDC22/CCDC93) subcomplex consisting of COMMD1, COMMD2, COMMD3, COMMD4, COMMD5, COMMD6, COMMD7, COMMD8, COMMD9, COMMD10, CCDC22 and CCDC93; within the complex forms a heterodimer with COMMD4. Interacts with RELA, RELB, NFKB1/p105. Interacts with CCDC22, CCDC93, SCNN1B, CUL1, CUL2, CUL3, CUL4A, CUL4B, CUL5. Widely expressed with highest expression in thyroid.

It localises to the cytoplasm. The protein resides in the nucleus. In terms of biological role, scaffold protein in the commander complex that is essential for endosomal recycling of transmembrane cargos; the commander complex is composed of the CCC subcomplex and the retriever subcomplex. May modulate activity of cullin-RING E3 ubiquitin ligase (CRL) complexes. May down-regulate activation of NF-kappa-B. The chain is COMM domain-containing protein 8 (COMMD8) from Homo sapiens (Human).